Here is a 470-residue protein sequence, read N- to C-terminus: O-acyltransferase pboC (470 aa).

Active-site proton acceptor residues include His-149 and Asp-386.

Belongs to the plant acyltransferase family. As to quaternary structure, monomer.

It participates in secondary metabolite biosynthesis. O-acetyltransferase; part of the gene cluster that mediates the biosynthesis of protubonine B, a hydroxylated and diacetylated cyclo-L-Trp-L-Leu derivative. Within the pathway, pboC catalyzes the acetylation of protubonine D at the hydroxy group to produce protubonine C. The first step of the protubonine B synthesis is performed by the nonribosomal peptide synthetase pboA that catalyzes the formation of cyclo-L-Trp-L-Leu by condensing L-Leu with L-Trp. The flavin-dependent monooxygenase pboD is responsible for hydroxylation at C-3 of the indole ring and subsequent formation of the pyrrolidine ring, leadind to protubonine D. Protubonine D is further diacetylated by two acetyltransferases, pboB and pboC, to form the final product protubonine B via protubonine C. This Aspergillus ustus protein is O-acyltransferase pboC.